The chain runs to 431 residues: 3-phosphoshikimate 1-carboxyvinyltransferase (431 aa).

Positions 21, 22, and 26 each coordinate 3-phosphoshikimate. Lys21 contacts phosphoenolpyruvate. The phosphoenolpyruvate site is built by Gly94 and Arg122. 4 residues coordinate 3-phosphoshikimate: Ser167, Gln169, Asp315, and Lys342. Residue Gln169 participates in phosphoenolpyruvate binding. Asp315 serves as the catalytic Proton acceptor. The phosphoenolpyruvate site is built by Arg346 and Arg388.

The protein belongs to the EPSP synthase family. As to quaternary structure, monomer.

The protein resides in the cytoplasm. It catalyses the reaction 3-phosphoshikimate + phosphoenolpyruvate = 5-O-(1-carboxyvinyl)-3-phosphoshikimate + phosphate. It participates in metabolic intermediate biosynthesis; chorismate biosynthesis; chorismate from D-erythrose 4-phosphate and phosphoenolpyruvate: step 6/7. Catalyzes the transfer of the enolpyruvyl moiety of phosphoenolpyruvate (PEP) to the 5-hydroxyl of shikimate-3-phosphate (S3P) to produce enolpyruvyl shikimate-3-phosphate and inorganic phosphate. This chain is 3-phosphoshikimate 1-carboxyvinyltransferase, found in Pelotomaculum thermopropionicum (strain DSM 13744 / JCM 10971 / SI).